The following is a 395-amino-acid chain: Putative transport protein sll0063 (395 aa).

The next 8 helical transmembrane spans lie at 24 to 44 (LNAI…VLNA), 50 to 70 (IFGY…IAFL), 91 to 111 (FVFL…IPLA), 180 to 200 (VFTV…FYLL), 245 to 265 (ALGL…LFGL), 269 to 289 (VMAL…FLVA), 295 to 315 (MALQ…NGIA), and 328 to 348 (FWVL…GVIV).

The protein belongs to the autoinducer-2 exporter (AI-2E) (TC 2.A.86) family.

It localises to the cell membrane. In Synechocystis sp. (strain ATCC 27184 / PCC 6803 / Kazusa), this protein is Putative transport protein sll0063.